Here is a 51-residue protein sequence, read N- to C-terminus: Large ribosomal subunit protein bL33 (51 aa).

It belongs to the bacterial ribosomal protein bL33 family.

This chain is Large ribosomal subunit protein bL33, found in Vesicomyosocius okutanii subsp. Calyptogena okutanii (strain HA).